Here is a 345-residue protein sequence, read N- to C-terminus: MLKVESISKDYREFKLREISFDVREGEHFIILGPSGSGKTVLLEIIAGIISPDRGRILLRGEDITGLPPEKRNFSYIPQNYALFPHMTVFDNIAFGLKLRKIPRKEVARKVREVAESLGIDHLLHRKPRTLSGGEQQRVAIARALVVKPELLLMDEPFANLDVQTKSKLIREMKRWRKEFGFTAIHVTHSFEEALSLGDRVGIMLRGRLVQVGDVRDVFSKPKSEEVARFLGFENIIEGVANGRILKVGDLRIELPREVWGKVRVGIRPEDITIFMEGVKTSARNVFKARVEGIEDLGALVKLTLNLGGIILRAFITRSSLIELGIREGEEVYASFKASAIHVFP.

Residues 2 to 231 enclose the ABC transporter domain; it reads LKVESISKDY…PKSEEVARFL (230 aa). ATP is bound at residue 33–40; it reads GPSGSGKT. Residues 280–345 enclose the Mop domain; that stretch reads KTSARNVFKA…FKASAIHVFP (66 aa).

The protein belongs to the ABC transporter superfamily. Sulfate/tungstate importer (TC 3.A.1.6) family. The complex is composed of two ATP-binding proteins (WtpC), two transmembrane proteins (WtpB) and a solute-binding protein (WtpA).

Its subcellular location is the cell membrane. The enzyme catalyses tungstate(in) + ATP + H2O = tungstate(out) + ADP + phosphate + H(+). Its function is as follows. Part of the ABC transporter complex WtpABC involved in molybdate/tungstate import. Responsible for energy coupling to the transport system. This is Molybdate/tungstate import ATP-binding protein WtpC (wtpC) from Pyrococcus horikoshii (strain ATCC 700860 / DSM 12428 / JCM 9974 / NBRC 100139 / OT-3).